We begin with the raw amino-acid sequence, 166 residues long: Transcription antitermination protein NusB (166 aa).

Positions M1 to D18 are enriched in basic and acidic residues. A disordered region spans residues M1–E30.

This sequence belongs to the NusB family.

Functionally, involved in transcription antitermination. Required for transcription of ribosomal RNA (rRNA) genes. Binds specifically to the boxA antiterminator sequence of the ribosomal RNA (rrn) operons. This chain is Transcription antitermination protein NusB, found in Pseudomonas fluorescens (strain Pf0-1).